A 338-amino-acid polypeptide reads, in one-letter code: GTPase Obg (338 aa).

Residues 1-159 enclose the Obg domain; it reads MQFIDEVKIH…RWLRLELKLL (159 aa). Residues 160–331 form the OBG-type G domain; the sequence is ADVGLLGFPN…LLDEIARSLW (172 aa). GTP contacts are provided by residues 166–173, 191–195, 213–216, 283–286, and 312–314; these read GFPNVGKS, FTTLK, DIPG, NKMD, and SAA. Residues serine 173 and threonine 193 each coordinate Mg(2+).

The protein belongs to the TRAFAC class OBG-HflX-like GTPase superfamily. OBG GTPase family. In terms of assembly, monomer. Mg(2+) is required as a cofactor.

It localises to the cytoplasm. An essential GTPase which binds GTP, GDP and possibly (p)ppGpp with moderate affinity, with high nucleotide exchange rates and a fairly low GTP hydrolysis rate. Plays a role in control of the cell cycle, stress response, ribosome biogenesis and in those bacteria that undergo differentiation, in morphogenesis control. In Geobacter sulfurreducens (strain ATCC 51573 / DSM 12127 / PCA), this protein is GTPase Obg.